Consider the following 2030-residue polypeptide: Dedicator of cytokinesis protein 3 (2030 aa).

The SH3 domain occupies 6–67; it reads EEEKYGVVIC…PANYIHLKKA (62 aa). The C2 DOCK-type domain maps to 421–599; the sequence is RNDLYLTLEK…ESFFISTQLS (179 aa). A DOCKER domain is found at 1228 to 1635; the sequence is KSEINKEEMY…LYHEFPGLDK (408 aa). Disordered regions lie at residues 1641–1662, 1734–1771, 1849–1927, and 1951–2030; these read SGTSTPRGNVLASHSPMSPESI, SSSQASPSSSSLSSTHSAPSQMITSAPSSARGSPSLPD, DTPP…ADED, and QPCR…RGEQ. Serine 1658 is modified (phosphoserine). The segment covering 1734 to 1754 has biased composition (low complexity); that stretch reads SSSQASPSSSSLSSTHSAPSQ. Positions 1755–1765 are enriched in polar residues; sequence MITSAPSSARG. Residues 1880–1902 are compositionally biased toward low complexity; the sequence is GSNSTLSGSASSGVSSLSESNFG. Residues 1967–1977 show a composition bias toward pro residues; that stretch reads PMDPPALPPKP. The SH3-binding signature appears at 1970–1976; it reads PPALPPK. 2 stretches are compositionally biased toward basic and acidic residues: residues 1984 to 2001 and 2014 to 2030; these read ALEHDEGVLLREETERPR and AKEEQARMAWEHGRGEQ.

This sequence belongs to the DOCK family. As to quaternary structure, interacts with presenilin proteins PSEN1 and PSEN2. Interacts with CRK. In terms of tissue distribution, in normal brains, it is localized in the neuropil, and occasionally in the pyramidal cells, while in Alzheimer disease brains, it is associated with neurofibrillary tangles.

The protein localises to the cytoplasm. Its function is as follows. Potential guanine nucleotide exchange factor (GEF). GEF proteins activate some small GTPases by exchanging bound GDP for free GTP. Its interaction with presenilin proteins as well as its ability to stimulate Tau/MAPT phosphorylation suggest that it may be involved in Alzheimer disease. Ectopic expression in nerve cells decreases the secretion of amyloid-beta APBA1 protein and lowers the rate of cell-substratum adhesion, suggesting that it may affect the function of some small GTPase involved in the regulation of actin cytoskeleton or cell adhesion receptors. This chain is Dedicator of cytokinesis protein 3 (DOCK3), found in Homo sapiens (Human).